Here is a 361-residue protein sequence, read N- to C-terminus: Inner kinetochore subunit CNN1 (361 aa).

The tract at residues 1-22 (MSTPRKAAGNNENTEVSEIRTP) is disordered. S2 is modified (phosphoserine; by CDK1). Position 14 is a phosphothreonine; by CDK1 and MPS1 (T14). Position 17 is a phosphoserine; by CDK1 and MPS1 (S17). 2 positions are modified to phosphothreonine; by CDK1: T21 and T42. A Phosphoserine; by CDK1 and MPS1 modification is found at S50. S52 carries the phosphoserine; by CDK1 modification. A Phosphothreonine; by MPS1 modification is found at T53. The residue at position 55 (S55) is a Phosphoserine; by CDK1. The tract at residues 60 to 84 (NKDPNEVRSFLQDLSQVLARKSQGN) is interacts with the NDC80 complex subunits SPC24 and SPC25 and with the KNL1 complex. S74 bears the Phosphoserine; by CDK1 and MPS1 mark. Residues T86 and T88 each carry the phosphothreonine; by MPS1 modification. T91 bears the Phosphothreonine; by CDK1 and MPS1 mark. Positions 103–132 (EESQPEENELLRSRSEKLTDNNIGNETQPD) are disordered. The span at 111-121 (ELLRSRSEKLT) shows a compositional bias: basic and acidic residues. S115 is modified (phosphoserine; by CDK1). A compositionally biased stretch (polar residues) spans 122 to 132 (DNNIGNETQPD). T129 carries the phosphothreonine; by CDK1 and MPS1 modification. Position 134 is a phosphothreonine; by MPS1 (T134). At S135 the chain carries Phosphoserine; by MPS1. T139 is modified (phosphothreonine; by CDK1 and MPS1). S153 carries the post-translational modification Phosphoserine; by MPS1. The residue at position 174 (T174) is a Phosphothreonine; by MPS1. S177 is modified (phosphoserine; by CDK1). A Phosphothreonine; by CDK1 modification is found at T191. Phosphoserine; by CDK1 is present on S192. The tract at residues 193–255 (PSIGMDQVDE…SDENLDDIGN (63 aa)) is disordered. The span at 219 to 254 (PLSEDLPSDDKEETEEAENEDYSFENTSDENLDDIG) shows a compositional bias: acidic residues. A Phosphoserine; by CDK1 modification is found at S268. S269 is modified (phosphoserine; by MPS1 and IPL1).

It belongs to the CENP-T/CNN1 family. In terms of assembly, component of the inner kinetochore constitutive centromere-associated network (CCAN) (also known as central kinetochore CTF19 complex in yeast), which is composed of at least AME1, CHL4, CNN1, CTF3, CTF19, IML3, MCM16, MCM21, MCM22, MHF1, MHF2, MIF2, NKP1, NKP2, OKP1 and WIP1. Interacts (via N-terminus) with the outer kinetochore NDC80 complex subunits SPC24 (via C-terminus) and SPC25 (via C-terminus); the interaction is direct and contributes to the correct spatiotemporal organization of the KMN network. Interacts with outer kinetochore MIS12 complex subunit NNF1. Interacts (via N-terminus) with the KNL1 complex. In terms of processing, phosphorylation of the C-terminus by MPS1 kinase regulates interaction with the outer kinetochore Ndc80 complex. Phosphorylation levels rise from S-phase and through metaphase, the protein is thendephosphorylated in anaphase.

It is found in the nucleus. The protein localises to the chromosome. It localises to the centromere. The protein resides in the kinetochore. In terms of biological role, component of the kinetochore, a multiprotein complex that assembles on centromeric DNA and attaches chromosomes to spindle microtubules, mediating chromosome segregation and sister chromatid segregation during meiosis and mitosis. Component of the inner kinetochore constitutive centromere-associated network (CCAN), which serves as a structural platform for outer kinetochore assembly. Modulates outer kinetochore KMN network activity by regulating interactions within the network. This is Inner kinetochore subunit CNN1 (CNN1) from Saccharomyces cerevisiae (strain ATCC 204508 / S288c) (Baker's yeast).